Consider the following 147-residue polypeptide: Deoxyuridine 5'-triphosphate nucleotidohydrolase (147 aa).

Substrate is bound by residues 67–69 (RSG), asparagine 80, and 84–86 (TID).

This sequence belongs to the dUTPase family. Mg(2+) serves as cofactor.

It carries out the reaction dUTP + H2O = dUMP + diphosphate + H(+). The protein operates within pyrimidine metabolism; dUMP biosynthesis; dUMP from dCTP (dUTP route): step 2/2. Its function is as follows. This enzyme is involved in nucleotide metabolism: it produces dUMP, the immediate precursor of thymidine nucleotides and it decreases the intracellular concentration of dUTP so that uracil cannot be incorporated into DNA. The protein is Deoxyuridine 5'-triphosphate nucleotidohydrolase of Anaeromyxobacter sp. (strain Fw109-5).